The following is a 402-amino-acid chain: Argininosuccinate synthase (402 aa).

Position 7–15 (7–15 (LYSGGLDTS)) interacts with ATP. Residue Tyr-83 participates in L-citrulline binding. Position 113 (Gly-113) interacts with ATP. L-aspartate is bound by residues Thr-115, Asn-119, and Asp-120. Position 119 (Asn-119) interacts with L-citrulline. L-citrulline is bound by residues Arg-123, Ser-169, Ser-178, Glu-253, and Tyr-265.

The protein belongs to the argininosuccinate synthase family. Type 1 subfamily. As to quaternary structure, homotetramer.

The protein resides in the cytoplasm. It carries out the reaction L-citrulline + L-aspartate + ATP = 2-(N(omega)-L-arginino)succinate + AMP + diphosphate + H(+). The protein operates within amino-acid biosynthesis; L-arginine biosynthesis; L-arginine from L-ornithine and carbamoyl phosphate: step 2/3. The protein is Argininosuccinate synthase of Thermoplasma acidophilum (strain ATCC 25905 / DSM 1728 / JCM 9062 / NBRC 15155 / AMRC-C165).